A 115-amino-acid chain; its full sequence is uncharacterized protein (115 aa).

Residues 1-24 (MLPLCLTFLSFFLSLGGSFKAVMT) form the signal peptide. The next 2 helical transmembrane spans lie at 39 to 59 (FWIFNWTVTLIPLNSLVALAI) and 93 to 113 (YLTSLGSNFGGIFVYPLFLLS).

The protein resides in the membrane. This is an uncharacterized protein from Saccharomyces cerevisiae (strain ATCC 204508 / S288c) (Baker's yeast).